The chain runs to 511 residues: Maturase K (511 aa).

This sequence belongs to the intron maturase 2 family. MatK subfamily.

The protein resides in the plastid. Its subcellular location is the chloroplast. Its function is as follows. Usually encoded in the trnK tRNA gene intron. Probably assists in splicing its own and other chloroplast group II introns. In Nandina domestica (Heavenly bamboo), this protein is Maturase K.